The sequence spans 546 residues: Coatomer subunit delta (546 aa).

Residues 190–440 (NRFMGSKDPN…VIFTIPVFPQ (251 aa)) form an interaction with DSL1 region. The segment at 236–287 (PMATSQRAGHSATGGMKLGGGAGRRAGAAPRPSAISSASSGTPPPPEEDVPE) is disordered. Residues 260-276 (RAGAAPRPSAISSASSG) show a composition bias toward low complexity. Phosphothreonine is present on Thr-277. An MHD domain is found at 288 to 546 (NNGILISIKE…SLKSDEYLVQ (259 aa)).

This sequence belongs to the adaptor complexes medium subunit family. Delta-COP subfamily. Oligomeric complex that consists of at least the alpha, beta, beta', gamma, delta, epsilon and zeta subunits. Interacts with DSL1.

It localises to the cytoplasm. The protein localises to the golgi apparatus membrane. It is found in the cytoplasmic vesicle. Its subcellular location is the COPI-coated vesicle membrane. Functionally, the coatomer is a cytosolic protein complex that binds to dilysine motifs and reversibly associates with Golgi non-clathrin-coated vesicles, which further mediate biosynthetic protein transport from the ER, via the Golgi up to the trans Golgi network. Coatomer complex is required for budding from Golgi membranes, and is essential for the retrograde Golgi-to-ER transport of dilysine-tagged proteins. This Saccharomyces cerevisiae (strain ATCC 204508 / S288c) (Baker's yeast) protein is Coatomer subunit delta (RET2).